The chain runs to 64 residues: Disintegrin VB7B (64 aa).

Residues Glu1 to Asn64 form the Disintegrin domain. 4 cysteine pairs are disulfide-bonded: Cys10–Cys33, Cys24–Cys30, Cys29–Cys54, and Cys42–Cys61. A Cell attachment site; atypical (KGD) motif is present at residues Lys46–Asp48.

Belongs to the venom metalloproteinase (M12B) family. P-II subfamily. P-IIe sub-subfamily. As to quaternary structure, heterodimer with VB7A; disulfide-linked. Expressed by the venom gland.

It is found in the secreted. Functionally, poor inhibitor of platelet aggregation. The disintegrin inhibits the adhesion of cells expressing the RGD-dependent integrin alpha-5/beta-1 (ITGA5/ITGB1) to immobilized fibronectin. Inhibition on alpha-IIb/beta-3 (ITGA2B/ITGB3) is low. The chain is Disintegrin VB7B from Vipera berus berus (Common viper).